Here is a 171-residue protein sequence, read N- to C-terminus: Dual specificity protein phosphatase OPG106 (171 aa).

Belongs to the protein-tyrosine phosphatase family. Non-receptor class dual specificity subfamily. Homodimer.

Its subcellular location is the virion. It localises to the host cytoplasm. The enzyme catalyses O-phospho-L-tyrosyl-[protein] + H2O = L-tyrosyl-[protein] + phosphate. The catalysed reaction is O-phospho-L-seryl-[protein] + H2O = L-seryl-[protein] + phosphate. Its function is as follows. Serine/tyrosine phosphatase which down-regulates cellular antiviral response by dephosphorylating activated host STAT1 and blocking interferon (IFN)-stimulated innate immune responses. Dephosphorylates the OPG144 protein. The sequence is that of Dual specificity protein phosphatase OPG106 (OPG106) from Monkeypox virus.